We begin with the raw amino-acid sequence, 208 residues long: Negative modulator of initiation of replication (208 aa).

An interaction with DNA region spans residues 115–116 (AV).

This sequence belongs to the SeqA family. Homodimer. Polymerizes to form helical filaments.

The protein localises to the cytoplasm. In terms of biological role, negative regulator of replication initiation, which contributes to regulation of DNA replication and ensures that replication initiation occurs exactly once per chromosome per cell cycle. Binds to pairs of hemimethylated GATC sequences in the oriC region, thus preventing assembly of replication proteins and re-initiation at newly replicated origins. Repression is relieved when the region becomes fully methylated. The protein is Negative modulator of initiation of replication of Shewanella frigidimarina (strain NCIMB 400).